Here is a 350-residue protein sequence, read N- to C-terminus: Enoyl-[acyl-carrier-protein] reductase, mitochondrial (350 aa).

Residues 1-12 (MWLGLRLFHRPF) constitute a mitochondrion transit peptide. The active-site Proton donor is the Y68. Residues N141, 167–170 (NSGV), 190–192 (RDR), 259–262 (YGGM), 284–286 (FWV), and K345 contribute to the NADP(+) site.

The protein belongs to the zinc-containing alcohol dehydrogenase family. Quinone oxidoreductase subfamily. In terms of assembly, homodimer. In terms of tissue distribution, expressed in the developing pronephros.

The protein localises to the mitochondrion. The catalysed reaction is a 2,3-saturated acyl-[ACP] + NADP(+) = a (2E)-enoyl-[ACP] + NADPH + H(+). Its function is as follows. Catalyzes the NADPH-dependent reduction of trans-2-enoyl thioesters in mitochondrial fatty acid synthesis (fatty acid synthesis type II). Fatty acid chain elongation in mitochondria uses acyl carrier protein (ACP) as an acyl group carrier, but the enzyme accepts both ACP and CoA thioesters as substrates in vitro. May provide the octanoyl chain used for lipoic acid biosynthesis, regulating protein lipoylation and mitochondrial respiratory activity. Involved in iron homeostasis; affecting Fe-S cluster assembly and ceramide metabolism. Required for proper morphology and bioenergetic functions of mitochondria. Required for maintenance of neurons. Functions in pronephros development, regulating late differentiation of all pronephric tubule segments. This is Enoyl-[acyl-carrier-protein] reductase, mitochondrial (mecr) from Xenopus tropicalis (Western clawed frog).